The sequence spans 251 residues: UDP-N-acetylglucosamine--dolichyl-phosphate N-acetylglucosaminyltransferase (251 aa).

The helical transmembrane segment at 150 to 167 (VGNLGLSFITFLLGGYYV) threads the bilayer.

The protein belongs to the glycosyltransferase 2 family.

It is found in the cell membrane. It catalyses the reaction a di-trans,poly-cis-dolichyl phosphate + UDP-N-acetyl-alpha-D-glucosamine = an N-acetyl-alpha-D-glucosaminyl-phospho-di-trans,poly-cis-dolichol + UDP. The protein operates within cell surface structure biogenesis; S-layer biogenesis. Its pathway is protein modification; protein glycosylation. Involved in the assembly of an N-linked disaccharide that decorates the S-layer glycoprotein and flagellins. AglK initiates N-linked glycosylation through the formation of alpha-linked dolichyl monophosphate N-acetylglucosamine. It catalyzes the transfer of GlcNAc from the donor substrate UDP-GlcNAc to dolichyl phosphate C55 (Dol-P) to yield Dol-P-GlcNAc. AglK reaction proceeds with retention of stereochemistry. The reaction is specific for UDP-GlcNAc. AglK shows a stronger preference for short dolichol (C55-60 Dol-P) substrates compared with the longer (C85-105 Dol-P). The chain is UDP-N-acetylglucosamine--dolichyl-phosphate N-acetylglucosaminyltransferase from Methanococcus voltae.